We begin with the raw amino-acid sequence, 173 residues long: ATP synthase subunit delta (173 aa).

Belongs to the ATPase delta chain family. F-type ATPases have 2 components, F(1) - the catalytic core - and F(0) - the membrane proton channel. F(1) has five subunits: alpha(3), beta(3), gamma(1), delta(1), epsilon(1). F(0) has three main subunits: a(1), b(2) and c(10-14). The alpha and beta chains form an alternating ring which encloses part of the gamma chain. F(1) is attached to F(0) by a central stalk formed by the gamma and epsilon chains, while a peripheral stalk is formed by the delta and b chains.

The protein localises to the cell inner membrane. In terms of biological role, f(1)F(0) ATP synthase produces ATP from ADP in the presence of a proton or sodium gradient. F-type ATPases consist of two structural domains, F(1) containing the extramembraneous catalytic core and F(0) containing the membrane proton channel, linked together by a central stalk and a peripheral stalk. During catalysis, ATP synthesis in the catalytic domain of F(1) is coupled via a rotary mechanism of the central stalk subunits to proton translocation. This protein is part of the stalk that links CF(0) to CF(1). It either transmits conformational changes from CF(0) to CF(1) or is implicated in proton conduction. The sequence is that of ATP synthase subunit delta from Campylobacter jejuni subsp. jejuni serotype O:6 (strain 81116 / NCTC 11828).